A 351-amino-acid polypeptide reads, in one-letter code: Sulfate/thiosulfate import ATP-binding protein CysA (351 aa).

The region spanning I3–L237 is the ABC transporter domain. G35–T42 serves as a coordination point for ATP.

Belongs to the ABC transporter superfamily. Sulfate/tungstate importer (TC 3.A.1.6) family. The complex is composed of two ATP-binding proteins (CysA), two transmembrane proteins (CysT and CysW) and a solute-binding protein (CysP).

Its subcellular location is the cell inner membrane. It carries out the reaction sulfate(out) + ATP + H2O = sulfate(in) + ADP + phosphate + H(+). The enzyme catalyses thiosulfate(out) + ATP + H2O = thiosulfate(in) + ADP + phosphate + H(+). In terms of biological role, part of the ABC transporter complex CysAWTP involved in sulfate/thiosulfate import. Responsible for energy coupling to the transport system. This Burkholderia mallei (strain ATCC 23344) protein is Sulfate/thiosulfate import ATP-binding protein CysA.